Reading from the N-terminus, the 93-residue chain is Putative regulatory protein LA_2599 (93 aa).

This sequence belongs to the RemA family.

The protein is Putative regulatory protein LA_2599 of Leptospira interrogans serogroup Icterohaemorrhagiae serovar Lai (strain 56601).